We begin with the raw amino-acid sequence, 180 residues long: Fucolectin-3 (180 aa).

Positions 1–22 (MEVKMIILLFQILAISTLKSDS) are cleaved as a signal peptide. Residues 31–179 (QENVALRGRA…VEVNVLFPAP (149 aa)) form an F5/8 type C-like region. Positions 58, 61, 63, and 72 each coordinate Ca(2+). 3 disulfides stabilise this stretch: C73/C168, C104/C105, and C130/C146. Residues H75 and R101 each coordinate alpha-L-fucose. The short motif at 101 to 103 (RGD) is the Cell attachment site element. R108 contributes to the alpha-L-fucose binding site. Residues C168 and E169 each coordinate Ca(2+).

This sequence belongs to the fucolectin family. As to quaternary structure, homotrimer. Parenchymal hepatocytes.

It localises to the secreted. The protein resides in the extracellular space. Functionally, acts as a defensive agent. Recognizes blood group fucosylated oligosaccharides including A, B, H and Lewis B-type antigens. Does not recognize Lewis A antigen and has low affinity for monovalent haptens. The chain is Fucolectin-3 from Anguilla japonica (Japanese eel).